A 394-amino-acid chain; its full sequence is Phosphoglycerate kinase (394 aa).

Substrate-binding positions include 21–23 (DFN), R36, 59–62 (HLGR), R118, and R151. S183 is modified (phosphoserine). Positions 201 and 292 each coordinate ATP. T299 bears the Phosphothreonine mark. Residues E323 and 350–353 (GGDS) each bind ATP.

It belongs to the phosphoglycerate kinase family. As to quaternary structure, monomer.

The protein resides in the cytoplasm. The catalysed reaction is (2R)-3-phosphoglycerate + ATP = (2R)-3-phospho-glyceroyl phosphate + ADP. Its pathway is carbohydrate degradation; glycolysis; pyruvate from D-glyceraldehyde 3-phosphate: step 2/5. This is Phosphoglycerate kinase from Bacillus cereus (strain ATCC 10987 / NRS 248).